Consider the following 258-residue polypeptide: DNA repair protein RecO (258 aa).

The protein belongs to the RecO family.

Functionally, involved in DNA repair and RecF pathway recombination. This is DNA repair protein RecO from Oceanobacillus iheyensis (strain DSM 14371 / CIP 107618 / JCM 11309 / KCTC 3954 / HTE831).